The following is an 815-amino-acid chain: MNAPSTMTDKKPEVEHLQGENPPKDTYSAEDTATAILRKKRKPNSLVVDDATNDDNSVITLSSNTMETLQLFRGDTVVVKGKRRKDTVLIVLTDEEMEDGVARINRVVRNNLRVRLGDIVTINPCPDIKYAERISVLPLADTVEGLTGSLFDVYLKPYFVEAYRPIRKGDLFVVRGSMRQVEFKVVDVAPDEFGIVSQDTIIHWEGEPINREDEESSLAEVGYDDIGGCRRQMAQIRELVELPLRHPQLFKSIGIKPPRGILMYGPPGTGKTLMARAVANETGAFFFLINGPEIMSKMAGESESNLRKAFEEAEKNSPAIIFIDEIDSIAPKREKTNGEVERRVVSQLLTLMDGMKARSNVVVMAATNRPNSIDPALRRFGRFDREVDVGIPDPTGRLEILRIHTKNMKLADDVDLEQIAAETHGYVGSDLASLCSEAAMQQIREKMDMIDLDEDEIDAEVLDSLGVTMDNFRFALGSSNPSALRETVVEVPNVRWEDIGGLEEVKRELRETVQMPVMYAEKFLRFGVTPSKGVLFFGPPGTGKTLLAKAIANECSANFISVKGPELLSMWFGESESNVRDIFDKARAAAPCVVFLDELDSIAKARGASAGDSGGGDRVVNQLLTEMDGVNSKKNVFVIGATNRPDQIDPALMRPGRLDQLIYVPLPDEEARFSILQTQLRHTPVAEDVDLRAVAKATHGFSGADLEFVVQRAVKLAIKDSIEEDIKRENETGEAPADDVVMDEDASVSQVQRHHVEEAMKMARRSVSDAEVRRYEAYAHQLLTSRGLTGFQFDSADSNTNGPSFGNDGADDLYA.

Residues 1-30 (MNAPSTMTDKKPEVEHLQGENPPKDTYSAE) are disordered. A compositionally biased stretch (basic and acidic residues) spans 8–18 (TDKKPEVEHLQ). Residues 267 to 273 (PGTGKTL), asparagine 368, histidine 404, and 541 to 546 (GTGKTL) contribute to the ATP site. A disordered region spans residues 794-815 (DSADSNTNGPSFGNDGADDLYA). Residues 795-804 (SADSNTNGPS) show a composition bias toward polar residues.

It belongs to the AAA ATPase family. Component of the ribosome quality control complex (RQC), composed of the E3 ubiquitin ligase rkr1/ltn1, rqc1 and mtr1/rqc2, as well as cdc48 and its ubiquitin-binding cofactors. RQC forms a stable complex with 60S ribosomal subunits. Interacts with ubx2 and ubx3. Interacts with lub1. Interacts with rbd2 (via C-terminal SHP box); the interaction is required for rbd2-mediated cleavage of sre1 and sre2.

It is found in the cytoplasm. The protein localises to the nucleus. It catalyses the reaction ATP + H2O = ADP + phosphate + H(+). With respect to regulation, the first ATP-binding region has low ATPase activity. The second ATP-binding region is responsible for ATPase activity. ATP binding to the first ATP-binding region induces intrinsic activity of the second ATP-binding region. While ATP binding to the first ATP-binding region appears to prevent ATP hydrolysis by the second ATP-binding region, ADP-binding to first region promotes the coordinate and cooperative ATPase cycle of the second ATP-binding region. ATP binding to the first ATP-binding region induces a conformational change, promoting the rotation of the first ATP-binding region relative to the second ATP-binding region in the hexamer. Functionally, ATP-dependent chaperone which probably uses the energy provided by ATP hydrolysis to generate mechanical force to unfold substrate proteins, disassemble protein complexes, and disaggregate protein aggregates. By recruiting and promoting the degradation of ubiquitinated proteins, plays a role in the ubiquitin fusion degradation (UFD) pathway. Has a role in the endoplasmic reticulum-associated degradation (ERAD) pathway which mediates the cytoplasmic elimination of misfolded proteins exported from the ER. Involved in spindle disassembly. Component of the ribosome quality control complex (RQC), a ribosome-associated complex that mediates ubiquitination and extraction of incompletely synthesized nascent chains for proteasomal degradation. CDC48 may provide the mechanical force that dislodges the polyubiquitinated nascent peptides from the exit channel. Required for ribophagy, a process which relocalizes ribosomal particles into the vacuole for degradation in response to starvation. Has a role in substrate recognition mediating rbd2-dependent cleavage of sterol regulatory element-binding protein sre1 and sre2. The sequence is that of Cell division cycle protein 48 from Schizosaccharomyces pombe (strain 972 / ATCC 24843) (Fission yeast).